Reading from the N-terminus, the 301-residue chain is Ornithine carbamoyltransferase (301 aa).

Residues Arg100 and 127–130 (HPCQ) each bind carbamoyl phosphate. L-ornithine is bound by residues Asn158, Asp221, and 225-226 (SM). Carbamoyl phosphate is bound by residues Cys260 and Arg288.

This sequence belongs to the aspartate/ornithine carbamoyltransferase superfamily. OTCase family.

The protein localises to the cytoplasm. The enzyme catalyses carbamoyl phosphate + L-ornithine = L-citrulline + phosphate + H(+). It functions in the pathway amino-acid biosynthesis; L-arginine biosynthesis; L-arginine from L-ornithine and carbamoyl phosphate: step 1/3. Its function is as follows. Reversibly catalyzes the transfer of the carbamoyl group from carbamoyl phosphate (CP) to the N(epsilon) atom of ornithine (ORN) to produce L-citrulline. The sequence is that of Ornithine carbamoyltransferase (argF) from Vibrio sp. (strain 2693).